Here is a 211-residue protein sequence, read N- to C-terminus: Major fimbrial subunit (211 aa).

Positions 1-20 (MKKTLLGSLILLAFAGNVQA) are cleaved as a signal peptide. Cys43 and Cys83 form a disulfide bridge.

Belongs to the fimbrial protein family.

The protein resides in the fimbrium. Functionally, mediates adherence to oropharyngeal epithelial cells. Helps the airway colonization process. This chain is Major fimbrial subunit (hifA), found in Haemophilus influenzae.